Here is a 266-residue protein sequence, read N- to C-terminus: UPF0328 protein ECU05_1610/ECU11_0120 (266 aa).

Belongs to the UPF0328 family.

In Encephalitozoon cuniculi (strain GB-M1) (Microsporidian parasite), this protein is UPF0328 protein ECU05_1610/ECU11_0120.